A 60-amino-acid chain; its full sequence is Potassium channel toxin ImKTx88 (60 aa).

The first 22 residues, Met-1 to Ala-22, serve as a signal peptide directing secretion. 3 disulfides stabilise this stretch: Cys-30–Cys-51, Cys-36–Cys-56, and Cys-40–Cys-58.

This sequence belongs to the short scorpion toxin superfamily. Potassium channel inhibitor family. In terms of tissue distribution, expressed by the venom gland.

The protein resides in the secreted. Its function is as follows. Recombinant toxin selectively inhibits Kv1.3/KCNA3 potassium channels with an IC(50) of 91 pM. This is Potassium channel toxin ImKTx88 from Isometrus maculatus (Lesser brown scorpion).